The chain runs to 468 residues: Ribulose bisphosphate carboxylase large chain (468 aa).

Residue lysine 7 is modified to N6,N6,N6-trimethyllysine. Positions 116 and 166 each coordinate substrate. The Proton acceptor role is filled by lysine 168. Lysine 170 serves as a coordination point for substrate. The Mg(2+) site is built by lysine 194, aspartate 196, and glutamate 197. Lysine 194 is modified (N6-carboxylysine). The active-site Proton acceptor is the histidine 287. Substrate is bound by residues arginine 288, histidine 320, and serine 372.

Belongs to the RuBisCO large chain family. Type I subfamily. As to quaternary structure, heterohexadecamer of 8 large chains and 8 small chains; disulfide-linked. The disulfide link is formed within the large subunit homodimers. Requires Mg(2+) as cofactor. Post-translationally, the disulfide bond which can form in the large chain dimeric partners within the hexadecamer appears to be associated with oxidative stress and protein turnover.

Its subcellular location is the plastid. It is found in the chloroplast. It carries out the reaction 2 (2R)-3-phosphoglycerate + 2 H(+) = D-ribulose 1,5-bisphosphate + CO2 + H2O. The enzyme catalyses D-ribulose 1,5-bisphosphate + O2 = 2-phosphoglycolate + (2R)-3-phosphoglycerate + 2 H(+). In terms of biological role, ruBisCO catalyzes two reactions: the carboxylation of D-ribulose 1,5-bisphosphate, the primary event in carbon dioxide fixation, as well as the oxidative fragmentation of the pentose substrate in the photorespiration process. Both reactions occur simultaneously and in competition at the same active site. This chain is Ribulose bisphosphate carboxylase large chain, found in Cornus alternifolia (Pagoda dogwood).